A 476-amino-acid chain; its full sequence is UPF0481 protein At3g47200 (476 aa).

Positions M1–R24 are disordered. 2 helical membrane passes run L133–G153 and A439–L459.

This sequence belongs to the UPF0481 family.

It is found in the membrane. The protein is UPF0481 protein At3g47200 of Arabidopsis thaliana (Mouse-ear cress).